A 208-amino-acid chain; its full sequence is Uracil phosphoribosyltransferase (208 aa).

5-phospho-alpha-D-ribose 1-diphosphate contacts are provided by residues Arg-78, Arg-103, and Asp-130 to Thr-138. Residues Ile-193 and Gly-198–Ala-200 contribute to the uracil site. Asp-199 is a binding site for 5-phospho-alpha-D-ribose 1-diphosphate.

It belongs to the UPRTase family. Mg(2+) is required as a cofactor.

It catalyses the reaction UMP + diphosphate = 5-phospho-alpha-D-ribose 1-diphosphate + uracil. It participates in pyrimidine metabolism; UMP biosynthesis via salvage pathway; UMP from uracil: step 1/1. Its activity is regulated as follows. Allosterically activated by GTP. Catalyzes the conversion of uracil and 5-phospho-alpha-D-ribose 1-diphosphate (PRPP) to UMP and diphosphate. This Campylobacter jejuni subsp. jejuni serotype O:6 (strain 81116 / NCTC 11828) protein is Uracil phosphoribosyltransferase.